A 425-amino-acid chain; its full sequence is Serine--tRNA ligase (425 aa).

230–232 (TAE) lines the L-serine pocket. 261–263 (RSE) provides a ligand contact to ATP. Glu-284 provides a ligand contact to L-serine. Residue 348 to 351 (EISS) participates in ATP binding. Residue Ser-384 coordinates L-serine.

Belongs to the class-II aminoacyl-tRNA synthetase family. Type-1 seryl-tRNA synthetase subfamily. As to quaternary structure, homodimer. The tRNA molecule binds across the dimer.

Its subcellular location is the cytoplasm. The enzyme catalyses tRNA(Ser) + L-serine + ATP = L-seryl-tRNA(Ser) + AMP + diphosphate + H(+). It catalyses the reaction tRNA(Sec) + L-serine + ATP = L-seryl-tRNA(Sec) + AMP + diphosphate + H(+). It functions in the pathway aminoacyl-tRNA biosynthesis; selenocysteinyl-tRNA(Sec) biosynthesis; L-seryl-tRNA(Sec) from L-serine and tRNA(Sec): step 1/1. Functionally, catalyzes the attachment of serine to tRNA(Ser). Is also able to aminoacylate tRNA(Sec) with serine, to form the misacylated tRNA L-seryl-tRNA(Sec), which will be further converted into selenocysteinyl-tRNA(Sec). In Streptococcus sanguinis (strain SK36), this protein is Serine--tRNA ligase.